A 134-amino-acid polypeptide reads, in one-letter code: Large ribosomal subunit protein eL14z (134 aa).

The protein belongs to the eukaryotic ribosomal protein eL14 family.

The protein is Large ribosomal subunit protein eL14z (RPL14A) of Arabidopsis thaliana (Mouse-ear cress).